Reading from the N-terminus, the 350-residue chain is MDKEKLKAIEAAMGNIEKQFGKGSVMKLGEKNILDIEAISTGCLGMDIALGIGGVPKGRIVEIYGPESSGKTTVALHIIAEAQKNGGVAAFIDAEHALDPSYARKLGVDIDNLIVSQPDTGEQGLEIAEALVRSNAIDIVVVDSVAALVPKAEIQGEMGDSHVGLQARLMSQALRKLAGSINKSNCVAIFINQLREKVGIMFGSPETTPGGRALKFYSSVRLDVRRIDTIKQGDEFLGNRTRVKVTKNKVAPPFKNAEFDIMYNEGISRTGDVLDLGVKEEIVQKSGSWFSYNDVRLGQGRENAKQFLKDNPELLYEIENTIREKYDLPIVKNNIKAEVEDKKEKKAEEV.

65-72 (GPESSGKT) is an ATP binding site.

The protein belongs to the RecA family.

The protein localises to the cytoplasm. Its function is as follows. Can catalyze the hydrolysis of ATP in the presence of single-stranded DNA, the ATP-dependent uptake of single-stranded DNA by duplex DNA, and the ATP-dependent hybridization of homologous single-stranded DNAs. It interacts with LexA causing its activation and leading to its autocatalytic cleavage. This chain is Protein RecA, found in Clostridium tetani (strain Massachusetts / E88).